Reading from the N-terminus, the 507-residue chain is Anaerobic nitric oxide reductase transcription regulator NorR (507 aa).

Residue D57 is modified to 4-aspartylphosphate. One can recognise a Sigma-54 factor interaction domain in the interval 188-417; sequence IIGLSSVMQQ…LEHSIYRAAI (230 aa). Residues 216 to 223 and 279 to 288 each bind ATP; these read GETGVGKE and ADNGTLFLDE. Residues 483–502 constitute a DNA-binding region (H-T-H motif); sequence WAATARKLELDSGNLHRLAK.

The protein operates within nitrogen metabolism; nitric oxide reduction. In terms of biological role, required for the expression of anaerobic nitric oxide (NO) reductase, acts as a transcriptional activator for at least the norVW operon. Activation also requires sigma-54. This is Anaerobic nitric oxide reductase transcription regulator NorR from Serratia proteamaculans (strain 568).